A 78-amino-acid chain; its full sequence is Short neurotoxin OH-26 (78 aa).

The first 21 residues, 1–21 (MKNLLLTFLVVTIVCLDLGYT), serve as a signal peptide directing secretion. 4 disulfide bridges follow: cysteine 24/cysteine 40, cysteine 33/cysteine 58, cysteine 62/cysteine 70, and cysteine 71/cysteine 76.

This sequence belongs to the three-finger toxin family. Short-chain subfamily. As to expression, expressed by the venom gland.

The protein resides in the secreted. Its function is as follows. This three-finger toxin binds and inhibits the nicotinic acetylcholine receptor (nAChR). In Ophiophagus hannah (King cobra), this protein is Short neurotoxin OH-26.